Here is a 137-residue protein sequence, read N- to C-terminus: Pro-corazonin (137 aa).

The N-terminal stretch at 1 to 20 is a signal peptide; it reads MKHVFSTSLIVSLFVIFTDA. The residue at position 21 (Q21) is a Pyrrolidone carboxylic acid. N31 bears the Asparagine amide mark. A propeptide spanning residues 68-137 is cleaved from the precursor; it reads FLKSPCDVRL…RLLNDGMHRL (70 aa).

The protein belongs to the corazonin family.

Its subcellular location is the secreted. Cardioactive peptide. Corazonin is probably involved in the physiological regulation of the heart beat. This Aedes aegypti (Yellowfever mosquito) protein is Pro-corazonin.